We begin with the raw amino-acid sequence, 268 residues long: MEMO1 family protein Ta0237 (268 aa).

This sequence belongs to the MEMO1 family.

This is MEMO1 family protein Ta0237 from Thermoplasma acidophilum (strain ATCC 25905 / DSM 1728 / JCM 9062 / NBRC 15155 / AMRC-C165).